The chain runs to 155 residues: Deoxyuridine 5'-triphosphate nucleotidohydrolase (155 aa).

Residues 74–76 (RSG), Asn87, and 91–93 (LID) each bind substrate.

Belongs to the dUTPase family. Requires Mg(2+) as cofactor.

It catalyses the reaction dUTP + H2O = dUMP + diphosphate + H(+). It participates in pyrimidine metabolism; dUMP biosynthesis; dUMP from dCTP (dUTP route): step 2/2. Its function is as follows. This enzyme is involved in nucleotide metabolism: it produces dUMP, the immediate precursor of thymidine nucleotides and it decreases the intracellular concentration of dUTP so that uracil cannot be incorporated into DNA. The sequence is that of Deoxyuridine 5'-triphosphate nucleotidohydrolase from Xylella fastidiosa (strain M12).